Here is a 507-residue protein sequence, read N- to C-terminus: Zinc finger protein Aiolos (507 aa).

Residues 1 to 85 (MEDIQPTVEL…PMGDAEESEM (85 aa)) form a disordered region. Thr20 carries the phosphothreonine modification. 2 positions are modified to phosphoserine: Ser22 and Ser42. Composition is skewed to basic and acidic residues over residues 33–46 (KPHEIENVDSREAP) and 56–72 (DSMKVKDEYSDRDENIM). Glycyl lysine isopeptide (Lys-Gly) (interchain with G-Cter in SUMO2) cross-links involve residues Lys61, Lys73, and Lys100. 3 C2H2-type zinc fingers span residues 117 to 139 (MNCDVCGLSCISFNVLMVHKRSH), 145 to 167 (FQCNQCGASFTQKGNLLRHIKLH), and 173 to 195 (FKCHLCNYACQRRDALTGHLRTH). The C2H2-type 4; atypical zinc-finger motif lies at 201–223 (YKCEFCGRSYKQRSSLEEHKERC). A Glycyl lysine isopeptide (Lys-Gly) (interchain with G-Cter in SUMO2) cross-link involves residue Lys244. A Phosphothreonine modification is found at Thr325. Residues 370-396 (LPSERGLSPNNSAQDSTDTDSNHEDRQ) are disordered. Ser377 is subject to Phosphoserine. The segment at 450-472 (FRCDHCHVLFLDYVMFTIHMGCH) adopts a C2H2-type 5 zinc-finger fold. Positions 450-502 (FRCDHCHVLFLDYVMFTIHMGCHGFRDPFECNMCGYRSHDRYEFSSHIARGEH) are mediates homodimerization and heterodimerization. The segment at 478-502 (FECNMCGYRSHDRYEFSSHIARGEH) adopts a C2H2-type 6; atypical zinc-finger fold.

Belongs to the Ikaros C2H2-type zinc-finger protein family. In terms of assembly, homodimer. Heterodimer with other IKAROS family members. Interacts with IKZF4 and IKZF5. Interacts with HRAS. Interacts with FOXP3; this interaction may be required for silencing target genes and regulating the suppressive activity of FOXP3-positive regulatory T-cells (Treg). Interacts with BCL21L isoform Bcl-X(L); this interaction blocks the anti-apoptotic role of BCL21L. Associates with histone deacetylase complexes containing HDAC1, MTA2 and SIN3A. Interacts with IKZF1. Expression is restricted to lymphoid tissues. Expressed at highest levels in spleen and at lower levels in the thymus and bone marrow. First detected in more committed lymphoid progenitors and strongly up-regulated as these differentiate into pre-T and pre-B cell precursors.

It is found in the nucleus. Its subcellular location is the cytoplasm. In terms of biological role, transcription factor that plays an important role in the regulation of lymphocyte differentiation. Binds to GGGAA. Plays an essential role in regulation of B-cell differentiation, proliferation and maturation to an effector state. Involved in regulating BCL2 expression and controlling apoptosis in T-cells in an IL2-dependent manner. This is Zinc finger protein Aiolos (Ikzf3) from Mus musculus (Mouse).